We begin with the raw amino-acid sequence, 444 residues long: MSLPDSLPSSSSSPPVTREETGFHRFEHHGNDSGFDHRDRPPWNRSEYDYRHGSVVASENVRNNSTSEDPWSCVVVVATFCIFVSMTLILGLYGTTNVWLGPNSSFLIKPTSVFVQNVIVEELGNKGSGLILYGLNQAPQLDVLTKWSEVHYLAVPNDSYKYWIQYLNKGSRVKVSYNVESVGSSLYLVIAQGVDGLSEWVQDPTRPDTTLSWHIISDSGYIEQDITKSSSYYVAVGNVYLNEVKATIDIQVEGVLYDTTNAYYNCSFPNDKCTLSVPLFGTNAAVLTSPGPKLNNSKNEFCAKLSYEPRWIAYIVCMGVVTALLLIVSSLFNKRQPVTEDETVDENDDVAPLIPGKDDDNSSWCSSYSSILTSTEELEGAHGEGHSSTRYLCAICYDAPRDCFFLSCGHCVACFQCGTRIAETSGFCPVCRKKIRKVKKIFNV.

A compositionally biased stretch (low complexity) spans 1-15 (MSLPDSLPSSSSSPP). Residues 1–41 (MSLPDSLPSSSSSPPVTREETGFHRFEHHGNDSGFDHRDRP) form a disordered region. Positions 17-41 (TREETGFHRFEHHGNDSGFDHRDRP) are enriched in basic and acidic residues. 2 consecutive transmembrane segments (helical) span residues 74–94 (VVVV…GLYG) and 312–332 (IAYI…SSLF). Residues 393 to 432 (CAICYDAPRDCFFLSCGHCVACFQCGTRIAETSGFCPVCR) form an RING-type zinc finger.

Interacts with At1g78040, At1g10650, VHA-c4/AVAP4, VHA-c''2/VMA16 and TUFA. Expressed in the shoot apical meristems (SAM), root tips, pollen and inflorescences.

The protein resides in the endomembrane system. The catalysed reaction is S-ubiquitinyl-[E2 ubiquitin-conjugating enzyme]-L-cysteine + [acceptor protein]-L-lysine = [E2 ubiquitin-conjugating enzyme]-L-cysteine + N(6)-ubiquitinyl-[acceptor protein]-L-lysine.. Its pathway is protein modification; protein ubiquitination. Functionally, exhibits E2-dependent E3 ligase activity. Involved in pollen mitosis II (PMII) regulation during male gametogenesis. In Arabidopsis thaliana (Mouse-ear cress), this protein is E3 ubiquitin-protein ligase APD2.